Here is a 129-residue protein sequence, read N- to C-terminus: MSPSTPTDPCPCGRAAGYAQCCGQYHAGAAAPDAETLMRARYSAYVRRNVDYLLASWHPSTRPAELALDEGGRTTWLGLNVQRAIATGADTAEVVFLARYRIGGGSAVRMTEHSRFVREDGHWYYLDAR.

This sequence belongs to the UPF0225 family.

The protein is UPF0225 protein XC_4246 of Xanthomonas campestris pv. campestris (strain 8004).